The sequence spans 374 residues: Ribosomal RNA large subunit methyltransferase G (374 aa).

The protein belongs to the methyltransferase superfamily. RlmG family.

Its subcellular location is the cytoplasm. The catalysed reaction is guanosine(1835) in 23S rRNA + S-adenosyl-L-methionine = N(2)-methylguanosine(1835) in 23S rRNA + S-adenosyl-L-homocysteine + H(+). Functionally, specifically methylates the guanine in position 1835 (m2G1835) of 23S rRNA. The polypeptide is Ribosomal RNA large subunit methyltransferase G (Pseudomonas syringae pv. tomato (strain ATCC BAA-871 / DC3000)).